A 336-amino-acid chain; its full sequence is Dihydroorotate dehydrogenase (quinone) (336 aa).

Residues 62–66 and threonine 86 each bind FMN; that span reads AGLDK. Lysine 66 lines the substrate pocket. Residue 111–115 participates in substrate binding; it reads NRMGF. FMN-binding residues include asparagine 139 and asparagine 172. Position 172 (asparagine 172) interacts with substrate. The active-site Nucleophile is serine 175. A substrate-binding site is contributed by asparagine 177. Positions 217 and 245 each coordinate FMN. 246–247 contributes to the substrate binding site; it reads NT. FMN-binding positions include glycine 268, glycine 297, and 318-319; that span reads YS.

It belongs to the dihydroorotate dehydrogenase family. Type 2 subfamily. Monomer. Requires FMN as cofactor.

Its subcellular location is the cell membrane. The enzyme catalyses (S)-dihydroorotate + a quinone = orotate + a quinol. The protein operates within pyrimidine metabolism; UMP biosynthesis via de novo pathway; orotate from (S)-dihydroorotate (quinone route): step 1/1. In terms of biological role, catalyzes the conversion of dihydroorotate to orotate with quinone as electron acceptor. This Citrobacter koseri (strain ATCC BAA-895 / CDC 4225-83 / SGSC4696) protein is Dihydroorotate dehydrogenase (quinone).